A 97-amino-acid chain; its full sequence is Secreted Ly-6/uPAR domain-containing protein 2 (97 aa).

A signal peptide spans 1–22 (MQLGTGLLLAAVLSLQLAAAEA). Intrachain disulfides connect Cys25-Cys47, Cys28-Cys34, Cys40-Cys68, Cys72-Cys88, and Cys89-Cys94. The UPAR/Ly6 domain occupies 25–95 (CHQCTGFGGC…IACCQTSLCN (71 aa)).

In terms of assembly, interacts with CHRNA3, CHRNA4, CHRNA5, CHRNA7, CHRNB2 and CHRNB4. Interacts with CHRM1 and CHRM3 probably in an allosteric manner. As to expression, expressed at highest levels in cervix and esophagus, followed by adult and fetal skin. Expressed at lower levels in brain, lung, stomach, small intestine, colon, rectum, uterus, and thymus. Not detected in spleen nor bone marrow. Up-regulated 3-fold in psoriatic lesional skin. In the epidermis, predominantly produced by keratinocytes of the suprabasal epidermal compartment (at protein level). In attached gingiva, produced at highest levels by basal cells located in the lowermost epithelial layers (at protein level). Detected in serum (at protein level).

It is found in the secreted. In terms of biological role, binds and may modulate the functional properties of nicotinic and muscarinic acetylcholine receptors. May regulate keratinocytes proliferation, differentiation and apoptosis. In vitro moderately inhibits ACh-evoked currents of alpha-3:beta-2-containing nAChRs and strongly these of alpha-4:beta-2-containing nAChRs, modulates alpha-7-containing nAChRs, and inhibits nicotine-induced signaling probably implicating alpha-3:beta-4-containing nAChRs. Proposed to act on alpha-3:beta-2 and alpha-7 nAChRs in an orthosteric, and on mAChRs, such as CHRM1 and CHRM3, in an allosteric manner. The polypeptide is Secreted Ly-6/uPAR domain-containing protein 2 (Homo sapiens (Human)).